We begin with the raw amino-acid sequence, 284 residues long: Tropomyosin alpha-3 chain (284 aa).

Position 1 is an N-acetylmethionine (methionine 1). Positions 1–43 are disordered; it reads MEAIKKKMQMLKLDKENALDRAEQAEAEQKQAEERSKQLEDEL. Residues 1–284 adopt a coiled-coil conformation; the sequence is MEAIKKKMQM…DHALNDMTSI (284 aa). Glutamate 2 bears the N-acetylalanine mark. Residues 12 to 40 are compositionally biased toward basic and acidic residues; it reads KLDKENALDRAEQAEAEQKQAEERSKQLE. At threonine 53 the chain carries Phosphothreonine. Serine 61 and serine 87 each carry phosphoserine. Threonine 108 carries the phosphothreonine modification. Phosphoserine is present on residues serine 206 and serine 215. Leucine 228 is modified (N6-acetyllysine). The residue at position 252 (threonine 252) is a Phosphothreonine. Phosphotyrosine is present on tyrosine 261. Serine 271 is subject to Phosphoserine. The residue at position 282 (threonine 282) is a Phosphothreonine. Residue serine 283 is modified to Phosphoserine.

This sequence belongs to the tropomyosin family. Homodimer. Heterodimer of an alpha (TPM1, TPM3 or TPM4) and a beta (TPM2) chain. Interacts with TMOD1. Interacts with TNNT1.

Its subcellular location is the cytoplasm. It is found in the cytoskeleton. Its function is as follows. Binds to actin filaments in muscle and non-muscle cells. Plays a central role, in association with the troponin complex, in the calcium dependent regulation of vertebrate striated muscle contraction. Smooth muscle contraction is regulated by interaction with caldesmon. In non-muscle cells is implicated in stabilizing cytoskeleton actin filaments. In Bos taurus (Bovine), this protein is Tropomyosin alpha-3 chain (TPM3).